The primary structure comprises 41 residues: Large ribosomal subunit protein bL36B (41 aa).

This sequence belongs to the bacterial ribosomal protein bL36 family.

This Neisseria meningitidis serogroup B (strain ATCC BAA-335 / MC58) protein is Large ribosomal subunit protein bL36B.